A 3132-amino-acid polypeptide reads, in one-letter code: MHQPPVRFTYRLLSYLVSAIIAGQPLLPAVGAVITPQNGAGMDKAANGVPVVNIATPNGAGISHNRFTDYNVGKEGLILNNATGKLNPTQLGGLIQNNPNLKAGGEAKGIINEVTGGKRSLLQGYTEVAGKAANVMVANPYGITCDGCGFINTPHATLTTGKPVMNADGSLQALEVTEGSITINGAGLDGTRSDAVSIIARATEVNAALHAKDLTVTAGANRITADGRVSALKGEGNVPKVAVDTGALGGMYARRIHLTSTESGVGVNLGNLYAREGDIILSSSGKLVLKNSLAGGNTTVTGTDVSLSGDNKAGGNLSVTGTTGLTLNQSRLVTDKNLVLSSSGQIVQNGGELTAGQNAMLSAQHLNQTSGTVNAAENVTLTTTDDTTLKGRSVAGKTLTVSSGSLNNGGTLVAGRDATVKTGTFSNTGTVQGNGLKVTATDLTSTGSIKSGSTLDISARNATLSGDAGAKDRALVTVSGTLENRGRLVSDDVLTLSATQINNSGTLSGAKELVASADTLTTTEKSVTNSDGNLMLDSASSTLAGETSAGGTVSVKGNSLKTTTTAQTQGNSVSVDVQNAQLDGTQAARDILTLNASEKLTHSGKSSAPSLSLSAPELTSSGVLVGSALNTQSQTLTNSGLLQGKASLTVNTQRLDNQQNGTLYSAADLTLDIPDIRNSGLITGDNGLMLNAVSLSNPGKIIADTLSVRATTLDGDGLLQGAGALALAGDTLSLGSNGRWLTAGDLSLRGKTLHTAGTTQGQNLTVQADRWANSGSVQATGNLTASATGQLTSTGDIMSQGDTTLNAATTDNRGSLLSAGTLSLDGNSLDNSGTVQGNHVTIRQNGVTNSGTLTGIAALTLAARMDMASPQPALMNNGGSLLTSGDLTITAGSLANSGAIQAADSLTARLTGELVSTAGSKVTSNGEMALSALNLSNSGQWIAKNLTLKANSLTSAGDITGVDALTLTVNQTLNNHASGKLLSAGVLTLKADSVKNDGQLQGNATTITAGQLTNGGHLQGETLTLAASGGVNNRSGGVLMSRNALNVSTATLSNQGTIQGGGGVSLNATDRLQNDGKILSGSNLTLTAQVLANTGSGLVQAATLLLDVVNTVNGGRVLATGSADVKGTTLNNTGTFQGADLLVNYHTFSNSGTLLGTSGLGVKGSSLLQNGTGRLYSAGNLLLDAQDFSGQGQVVATGDVTLKLIAALTNHGTLAAGKTLSVTSQNAVTNGGVMQGDAMVLGAGEAFTNNGTLTAGKGNSVFSAQRLFLNAPGSLQAGGDVSLNSRSDITISGFTGTAGSLTMNVAGTLLNSALIYAGNNLKLFTDRLHNQHGDILAGNSLWVQKDSSGTANSEIINRSGNIETTRGDITMNTAHLLNSWDAISASHEVIPGSSHGVISPVPENNRWWGVVRHDGVEYLAVYWGKGATVPDEYRIRTGDTETVTVSASGHAARISGGADMHIRAGRLDNEASFILAGGGMTLSGDTLNNQGWQEGTTGKETVWRLASGSLPKAWFTEPWYKVYRQVSPDATEASGTSPAGQYRAVISAAGDVSASFATDTGNTTVMPRAGGAGNTITVPSLNSLTPPTVSQGVSGEALLNESGTGITGPVWNDALPDTLKDIPGALSLSGASVSSYPLPSGNNGYFVPSTDPDSPYLITVNPKLDGLGKVDSSLFAGLYDLLRMQPGEAPRETDPAYTDEKQFLGSSYILDRLGLKPEKDYRFLGDAAFDTRYVSNVILNQTGSRYINGTGSDLAQMKYLMDSAAAQQKALGLTFGVSLTAGQVAQLTRSLLWWESVTINGQTVMVPKLYLSPEDITLHNGSVISGNNVQLAGGNITNSGSSINAQNDLLLDRTGSIDNLNAGLINAGGALNLKAIGDIGNISSVISGKTVSLESATGNISNLTRTEQWAMNNGYNHFSGTDTGPLAAVRATDSLFMGAAGDISITGAAVSAGDSVLLAAGNDLNMNAIQAGERRRYGGSGWYETHAVAPTVTAGNSLMLSAGRDVNSQAAGITAENSMDIRAGRDVNMAAESTGAGDHDSTFSMKTVHDSVRQQGTDMTSGGDITVTAGRDITSVATAVTAKGDIRVNAGHDIVLGTATESDYHYSESGETRNRLLSHQTTRTITEDSVTREKGSLLSGNRVTVNAGNNLTVQGSDVVADRDVSLAADNHVDVLAATSTDTSWRFKETKTSGLTGTGGIGFTTGSSKTTHDRREAGTTQSQSASTIGSTAGNVSITAGKQAHISGSDVIANRDISITGDSVVVDPGHDRRTVDEKFEQKKSGLTVALSGAVGSAINNAVTMAREAKETSDSRLAALKGTQAVLSGVQAGVNHGLQQQSADPNNGIGVSISLNHQQSKSETKYQHDIVSGSTLSAGNNVSVTATGKNKDHNNSGDMLITGSQIKSGNDTSLNAQNDILLAAAADTRQTTGKNSSKGGGVGVSFGGGTNGGGLSIFAGINGSEGREKGNGTTWTETTLDAGKNVSLTSGRDTTLSGAQVSGEKVTADVGNNLTISSLQDSDRYDSRQNRVAAGGSFTFGSMSGSGYASISQDKIKSNYDSVREQSGIYAGKDGFDVTVGNHTQLNGAVIASTATDDKNSLNTNTLGWSDIHNQADYKASHTGISLSGGSGMSASQMVASNAIAGAANALTGMSGSSGHAEGTTSSAISGGNLIIRNKESQKQDIAGLSRDPENANGSIAPIFDREKEQKRLQEAQVISQISGQMSNIVMTYGETEAMKAARKEHPGMSDAQLRETPEYREVMKGYGTGSTPQMVVQAITGVLGGLNAGNPGQVLAGGLNPAVAQLIKQATGDNREANLMAHAVWGALAAQLGGNNAASGAAGAFSGELAARYIIDNYYGGRTDNLSEQERQQISMLATIASGIAGGLVGNSTSAAGTGAQAGRNSVENNAMSGLEGFGTGFQSYVQAQEALVNNTNLTDKNGKVLNPATPEEIKYASDKLVTGSIPEGQDPARGLLISWGAGASVFGGELIAPAVGTVAVIGGTLLGGTTDAVKQFLTLKPGEQYSTTDTLIAAGEGGLTQGKGVIFSTFINTMGAYLGSKAKGEDPTGPMVGNAIGTALGNKAGDKFTKEMLSRGFGSVTSEVTGTVTGSVIGTVTDYQIEKLGKGNKEGAK.

Positions 1 to 32 (MHQPPVRFTYRLLSYLVSAIIAGQPLLPAVGA) form a signal peptide, signal. The two-partner system transport domain (TPS) stretch occupies residues 36 to 322 (PQNGAGMDKA…AGGNLSVTGT (287 aa)). Residues 351–1378 (GELTAGQNAM…ITMNTAHLLN (1028 aa)) are FHA-1. The tract at residues 1379–1635 (SWDAISASHE…LSLSGASVSS (257 aa)) is receptor-binding domain (RBD). The YP domain stretch occupies residues 1636 to 1820 (YPLPSGNNGY…LSPEDITLHN (185 aa)). Residues 1821–1859 (GSVISGNNVQLAGGNITNSGSSINAQNDLLLDRTGSIDN) form a periplasmic FHA-1 repeat (pFR) region. Residues 1930-2526 (RATDSLFMGA…QDSDRYDSRQ (597 aa)) are FHA-2. Disordered stretches follow at residues 2195-2228 (TGTG…STIG) and 2456-2497 (AGIN…SGAQ). 2 stretches are compositionally biased toward polar residues: residues 2217-2228 (GTTQSQSASTIG) and 2483-2497 (VSLT…SGAQ). The pre-toxin (PT) domain stretch occupies residues 2862-2904 (DNLSEQERQQISMLATIASGIAGGLVGNSTSAAGTGAQAGRNS). Positions 2905–2908 (VENN) match the VENN CT cleavage motif motif. The interval 2909-3121 (AMSGLEGFGT…IGTVTDYQIE (213 aa)) is C-terminal effector domain (CT).

This sequence in the N-terminal section; belongs to the CdiA toxin family. Probably interacts with cognate immunity protein CdiI. In terms of processing, expressed as 303 kDa protein which can be processed to 284 kDa and 195 kDa forms.

The protein resides in the secreted. It localises to the target cell. Its subcellular location is the target cell cytoplasm. Functionally, toxic component of a toxin-immunity protein module, which functions as a cellular contact-dependent growth inhibition (CDI) system. CDI modules allow bacteria to communicate with and inhibit the growth of closely related neighboring bacteria (target cell counts decrease 1000- to 10(5)-fold) in a contact-dependent fashion. Inhibitory cells must be in logarithmic (not stationary) phase to inhibit growth of their targets, but protein synthesis is not necessary. The presence of P or S but not type 1 pili protects the target cells against growth inhibition for this CDI. BamA on the outer membrane of target cells acts as a receptor for CdiA, while target cell multidrug efflux pump AcrB facilitates its transport into the cytoplasm. Outer membrane receptor function is dependent on extracellular loops of BamA. Cells undergoing CDI show a 2- to 5-fold reversible decrease in aerobic respiration, proton motive force and steady-state ATP levels, suggesting this CT module is an ionophore that disrupts the target cell's inner cell membrane. Growth recovery requires an energy source. Cells expressing this protein in the absence of CdiI initially form filaments, some of which contain multiple nucleoids, while others are devoid of nucleoids. CDI cells induce the phage shock response, but pspA is not required for recovery from CDI. CDI is neutralized by its cognate immunity protein CdiI, but not by non-cognate CdiI from other bacteria with different CDI systems. Plays a role in biofilm formation, a region N-terminal to residue 644 is implicated in this receptor-independent cell adhesion. In terms of biological role, the CdiA protein is thought to be exported from the cell through the central lumen of CdiB, the other half of its two-partner system (TPS). The TPS domain probably remains associated with CdiB while the FHA-1 domain forms an extended filament (33 nm long) with the receptor-binding domain (RBD) at its extremity; in the secretion arrested state the C-terminus of the RBD and YP domains form a hairpin-like structure as the FHA-2, PT and CT domains are periplasmic. The YP domain is probably responsible for this arrest at the point where it re-enters the host cell periplasm. Upon binding to a target cell outer membrane receptor (BamA for this CDI) a signal is transmitted to activate secretion. The filament becomes about 5 nm longer, the rest of CdiA is secreted and the FHA-2 domain becomes stably associated with the target cell's outer membrane where it facilitates entry of the toxic CT domain into the target cell periplasm. From there the toxic CT domain is cleaved and gains access to the target cell cytoplasm via an inner membrane protein (multidrug efflux pump AcrB for this CDI). The sequence is that of Toxin CdiA from Escherichia coli.